Consider the following 183-residue polypeptide: Ribulose bisphosphate carboxylase small subunit, chloroplastic (183 aa).

The transit peptide at Met-1–Gln-59 directs the protein to the chloroplast.

It belongs to the RuBisCO small chain family. Heterohexadecamer of 8 large and 8 small subunits.

It is found in the plastid. The protein resides in the chloroplast. Its function is as follows. RuBisCO catalyzes two reactions: the carboxylation of D-ribulose 1,5-bisphosphate, the primary event in carbon dioxide fixation, as well as the oxidative fragmentation of the pentose substrate. Both reactions occur simultaneously and in competition at the same active site. Although the small subunit is not catalytic it is essential for maximal activity. This chain is Ribulose bisphosphate carboxylase small subunit, chloroplastic, found in Pyrus pyrifolia (Chinese pear).